Here is a 67-residue protein sequence, read N- to C-terminus: Small ribosomal subunit protein bS21 (67 aa).

Belongs to the bacterial ribosomal protein bS21 family.

The polypeptide is Small ribosomal subunit protein bS21 (Desulfovibrio desulfuricans (strain ATCC 27774 / DSM 6949 / MB)).